The sequence spans 478 residues: TFIIA-alpha and beta-like factor (478 aa).

The segment at 309-427 is disordered; the sequence is VKQPRNIEEP…SGDDVSEQDV (119 aa). Over residues 390-401 the composition is skewed to polar residues; sequence SISNEDSATNSS. The segment covering 411–427 has biased composition (acidic residues); it reads VEEDPLNSGDDVSEQDV.

The protein belongs to the TFIIA subunit 1 family. In terms of tissue distribution, testis specific. Detected in adult testis mostly in round and elongating spermatids (at protein level). Detected in testis.

The protein resides in the nucleus. In terms of biological role, may function as a testis specific transcription factor. Binds DNA in conjunction with GTF2A2 and TBP (the TATA-binding protein) and together with GTF2A2, allows mRNA transcription. The sequence is that of TFIIA-alpha and beta-like factor (GTF2A1L) from Homo sapiens (Human).